A 1762-amino-acid polypeptide reads, in one-letter code: Kinase D-interacting substrate of 220 kDa (1762 aa).

Residues 1-508 are Cytoplasmic-facing; sequence MSVLISQSVI…WLIVFLTLLL (508 aa). ANK repeat units lie at residues 45–74, 78–107, 111–140, 145–174, 178–207, 211–240, 244–273, 277–306, 310–339, 343–372, and 376–405; these read AAEQGNVEIVKELLKNGANCNLEDLDNWTA, ASKEGHIHIVEELLKSGASLEHRDMGGWTA, ACYKGRTDVVELLLSHGANPSVTGLYSVYP, AGRGHADIVHLLLQNGAKVNCSDKYGTTPL, ARKGHLECVKHLLAMGADVDQEGANSMTAL, VKGGYTQSVKEILKRNPNVNLTDKDGNTAL, SKEGHIEIVQDLLDAGTYVNIPDRSGDTVL, VRGGHVEIVRALLQKYADIDIRGQDNKTAL, VEKGNATMVRDILQCNPDTEICTKDGETPL, TKMRNIEVVELLLDKGAKVSAVDKKGDTPL, and IRGRSRRLAELLLRNPKDGRLLYRPNKAGE. One can recognise a KAP NTPase domain in the interval 440–953; sequence YDLYSSALAD…NIVSVTGRLL (514 aa). Residues 509-529 form a helical membrane-spanning segment; the sequence is CGGLGLVFAFTVDTNLAIAIS. The Extracellular segment spans residues 530–533; sequence LSFL. The helical transmembrane segment at 534–554 threads the bilayer; it reads ALIYIFFIVIYFGGRREGESW. Residues 555-668 are Cytoplasmic-facing; sequence NWAWALSTRL…SFVIFLFIVG (114 aa). The helical transmembrane segment at 669–689 threads the bilayer; the sequence is CIIAGITLLAIFRVDPKHLTV. At 690 to 696 the chain is on the extracellular side; it reads NAILISI. The helical transmembrane segment at 697–717 threads the bilayer; sequence ASVVGLAFVLNCRTWWQVLDS. The Cytoplasmic portion of the chain corresponds to 718 to 1680; the sequence is LLNSQRKRLH…TPSTVTLNNN (963 aa). Residues S882 and S885 each carry the phosphoserine modification. T914 bears the Phosphothreonine mark. S918 carries the post-translational modification Phosphoserine; by PKD. Residues 1089-1092 are mediates interaction with CRKL; that stretch reads PRPP. S1163, S1288, S1344, S1351, S1353, S1354, and S1357 each carry phosphoserine. Disordered stretches follow at residues 1279-1305, 1336-1358, 1390-1440, and 1452-1556; these read DPRFLNENSSAPVPHGESARRSSHTEL, RHSNLSWQSQTRRTPSLSSLNSQ, EGGT…DGRK, and YSSS…EPIR. Positions 1338–1350 are enriched in polar residues; sequence SNLSWQSQTRRTP. Residues 1395–1422 show a composition bias toward low complexity; that stretch reads SSTISGRSSPHSTYYIGQSSSGGSIHST. The span at 1423-1440 shows a compositional bias: basic and acidic residues; sequence LEQERGKEGELKQEDGRK. The span at 1452-1462 shows a compositional bias: polar residues; sequence YSSSGVSTNEA. Phosphoserine occurs at positions 1513, 1518, 1547, and 1566. The segment covering 1514–1524 has biased composition (acidic residues); it reads DEDESGTEESD. The segment covering 1529-1553 has biased composition (basic and acidic residues); it reads LKDDKDKKAEGKAERVCKSPEHSAE. Positions 1571 to 1628 are disordered; that stretch reads DKKDSSDSGVRSNESSPNHSLHNEAADDSQLEKANLIELEDEGHSGKRGMPHSLSGLQ. Residues 1579–1590 show a composition bias toward polar residues; that stretch reads GVRSNESSPNHS. Residues S1615 and S1625 each carry the phosphoserine modification. At T1671 the chain carries Phosphothreonine. S1673 carries the phosphoserine modification. A Phosphothreonine modification is found at T1676. Residues 1704–1762 are disordered; the sequence is ILRPGPSPNPTAVQNENLKSMAHKRSQRSSYTRLSKDASELHAASSESTGFGEERESIL. Residues 1757-1762 carry the PDZ-binding motif; that stretch reads ERESIL.

As to quaternary structure, found in a complex, at least composed of KIDINS220, MAGI2, NTRK1 and RAPGEF2; the complex is mainly formed at late endosomes in a nerve growth factor (NGF)-dependent manner. Interacts with RAPGEF2; the interaction is strengthened after NGF stimulation. Isoform 2 interacts (via C-terminal domain) with MAGI2 isoform 1 (via PDZ domain). Interacts with NTRK1, NTRK2, NTRK3, ERKL and NGFR. Can form a ternary complex with NGFR and NTRK1 and this complex is affected by the expression levels of KIDINS220/ARMS. An increase in KIDINS220/ARMS expression leads to a decreased association of NGFR and NTRK1. Interacts (via PDZ-binding motif) with SNTA1 and SNTB2 (via PDZ domains). Interacts with EPHA4 and PRKD1. In terms of processing, tyrosine phosphorylated by NTRK1, NTRK2, EPHB2 and EPHA4. Phosphorylation at Ser-918 is induced by phorbol ester treatment. Phosphorylation by NTRK2 is induced by brain-derived neurotrophic factor (BDNF) and neurotrophin-4/5. Phosphorylation by NTRK1 is induced by nerve growth factor (NGF). As to expression, expressed in developing nervous system and in highly plastic areas of the adult brain. Also expressed in neuroendocrine cells, where it concentrates at the tip of neurites. Expressed in developing muscle and is concentrated at the neuromuscular junction (NMS). SNTA1 can regulate its localization in the NMS.

It is found in the membrane. Its subcellular location is the late endosome. Functionally, promotes a prolonged MAP-kinase signaling by neurotrophins through activation of a Rap1-dependent mechanism. Provides a docking site for the CRKL-C3G complex, resulting in Rap1-dependent sustained ERK activation. May play an important role in regulating postsynaptic signal transduction through the syntrophin-mediated localization of receptor tyrosine kinases such as EPHA4. In cooperation with SNTA1 can enhance EPHA4-induced JAK/STAT activation. Plays a role in nerve growth factor (NGF)-induced recruitment of RAPGEF2 to late endosomes and neurite outgrowth. May play a role in neurotrophin- and ephrin-mediated neuronal outgrowth and in axon guidance during neural development and in neuronal regeneration. In Rattus norvegicus (Rat), this protein is Kinase D-interacting substrate of 220 kDa (Kidins220).